The primary structure comprises 181 residues: Adenine phosphoribosyltransferase (181 aa).

The protein belongs to the purine/pyrimidine phosphoribosyltransferase family. Homodimer.

The protein resides in the cytoplasm. It catalyses the reaction AMP + diphosphate = 5-phospho-alpha-D-ribose 1-diphosphate + adenine. It participates in purine metabolism; AMP biosynthesis via salvage pathway; AMP from adenine: step 1/1. Its function is as follows. Catalyzes a salvage reaction resulting in the formation of AMP, that is energically less costly than de novo synthesis. This is Adenine phosphoribosyltransferase from Neorhizobium galegae (Rhizobium galegae).